A 186-amino-acid polypeptide reads, in one-letter code: Ribosome-recycling factor (186 aa).

It belongs to the RRF family.

It localises to the cytoplasm. In terms of biological role, responsible for the release of ribosomes from messenger RNA at the termination of protein biosynthesis. May increase the efficiency of translation by recycling ribosomes from one round of translation to another. The sequence is that of Ribosome-recycling factor from Burkholderia multivorans (strain ATCC 17616 / 249).